The chain runs to 344 residues: Palmitoyltransferase ZDHHC4 (344 aa).

The Lumenal portion of the chain corresponds to 1–2; that stretch reads MD. The helical transmembrane segment at 3 to 23 threads the bilayer; sequence FLVLFLFYLASVLMGLVLICV. The Cytoplasmic segment spans residues 24–67; sequence CSKTHSLKGLARGGAQIFSCIIPECLQRAVHGLLHYLFHTRNHT. Residues 68–88 form a helical membrane-spanning segment; the sequence is FIVLHLVLQGMVYTEYTWEVF. The Lumenal portion of the chain corresponds to 89–99; the sequence is GYCQELELSLH. A helical transmembrane segment spans residues 100-120; it reads YLLLPYLLLGVNLFFFTLTCG. Residues 121–192 are Cytoplasmic-facing; it reads TNPGIITKAN…NNCIGAWNIR (72 aa). Residues 149–199 form the DHHC domain; sequence VRCSTCDLRKPARSKHCSVCNWCVHRFDHHCVWVNNCIGAWNIRYFLIYVL. C179 serves as the catalytic S-palmitoyl cysteine intermediate. The helical transmembrane segment at 193–213 threads the bilayer; the sequence is YFLIYVLTLTASAATVAIVST. At 214 to 255 the chain is on the lumenal side; the sequence is TFLVHLVVMSDLYQETYIDDLGHLHVMDTVFLIQYLFLTFPR. Residues 256–276 form a helical membrane-spanning segment; the sequence is IVFMLGFVVVLSFLLGGYLLF. Residues 277-344 lie on the Cytoplasmic side of the membrane; sequence VLYLAATNQT…FPCHERKKQE (68 aa). The Di-lysine motif signature appears at 341–344; it reads KKQE.

The protein belongs to the DHHC palmitoyltransferase family. As to quaternary structure, interacts with CPT1A.

The protein resides in the endoplasmic reticulum membrane. It localises to the golgi apparatus membrane. Its subcellular location is the cell membrane. It catalyses the reaction L-cysteinyl-[protein] + hexadecanoyl-CoA = S-hexadecanoyl-L-cysteinyl-[protein] + CoA. Palmitoyltransferase that catalyzes the addition of palmitate onto protein substrates including the D(2) dopamine receptor DRD2, GSK3B or MAVS. Mediates GSK3B palmitoylation to prevent its AKT1-mediated phosphorylation leading to activation of the STAT3 signaling pathway. Also catalyzes MAVS palmitoylation which promotes its stabilization and activation by inhibiting 'Lys-48'- but facilitating 'Lys-63'-linked ubiquitination. In Homo sapiens (Human), this protein is Palmitoyltransferase ZDHHC4.